Consider the following 388-residue polypeptide: Methylthioribose-1-phosphate isomerase (388 aa).

The Proton donor role is filled by aspartate 258.

Belongs to the eIF-2B alpha/beta/delta subunits family. MtnA subfamily.

It is found in the cytoplasm. The protein resides in the nucleus. It catalyses the reaction 5-(methylsulfanyl)-alpha-D-ribose 1-phosphate = 5-(methylsulfanyl)-D-ribulose 1-phosphate. Its pathway is amino-acid biosynthesis; L-methionine biosynthesis via salvage pathway; L-methionine from S-methyl-5-thio-alpha-D-ribose 1-phosphate: step 1/6. Catalyzes the interconversion of methylthioribose-1-phosphate (MTR-1-P) into methylthioribulose-1-phosphate (MTRu-1-P). This Neurospora crassa (strain ATCC 24698 / 74-OR23-1A / CBS 708.71 / DSM 1257 / FGSC 987) protein is Methylthioribose-1-phosphate isomerase (mri-1).